The sequence spans 116 residues: U16-barytoxin-Tl1c (116 aa).

Residues 1-20 (MKTIIVFLSLLVLATKFGDA) form the signal peptide. Residues 21 to 74 (NEGVNQEQMKEVIQNEFREDFLNEMAAMSLLQQLEAIESTLLEKEADRNSRQKR) constitute a propeptide that is removed on maturation. 3 disulfide bridges follow: Cys-75–Cys-90, Cys-82–Cys-95, and Cys-89–Cys-110.

It belongs to the neurotoxin 14 (magi-1) family. 06 (ICK-Trit) subfamily. In terms of tissue distribution, expressed by the venom gland.

It is found in the secreted. Ion channel inhibitor. This chain is U16-barytoxin-Tl1c, found in Trittame loki (Brush-footed trapdoor spider).